We begin with the raw amino-acid sequence, 336 residues long: MLPFFPEPSLSYTQQNRTAVLLLNLGTPDAPTAQAVRPYLKSFLTDRRVVELPKWLWYPILHGLVLTLRPKKSAHAYEKIWFKEGSPLEVYTARQAAALAKRMPDLIVRHAMTYGNPSVADVLSELKAQGAGRLLVIPMYPQYAASSSGAAVDKVCEQLLLQRNQMSVRTVSRFYDDTGYIDAMKNHILRYWAEHGRGKKLMLSFHGVPQKHHDLGDPYPDECRHTAKLLAEALELTEDQYVVSFQSQFGRAKWVTPSTQDLFGKLPKQGVTELDVFCPGFLADCLETMEEIALMGREQFYEAGGKSYRYIPCLNDNPDWIDALVALAEENLGSWR.

H206 and E287 together coordinate Fe cation.

It belongs to the ferrochelatase family.

It is found in the cytoplasm. The catalysed reaction is heme b + 2 H(+) = protoporphyrin IX + Fe(2+). Its pathway is porphyrin-containing compound metabolism; protoheme biosynthesis; protoheme from protoporphyrin-IX: step 1/1. In terms of biological role, catalyzes the ferrous insertion into protoporphyrin IX. In Neisseria meningitidis serogroup B (strain ATCC BAA-335 / MC58), this protein is Ferrochelatase.